Consider the following 164-residue polypeptide: Endoribonuclease YbeY (164 aa).

Zn(2+) is bound by residues histidine 117, histidine 121, and histidine 127.

It belongs to the endoribonuclease YbeY family. Zn(2+) serves as cofactor.

It localises to the cytoplasm. Its function is as follows. Single strand-specific metallo-endoribonuclease involved in late-stage 70S ribosome quality control and in maturation of the 3' terminus of the 16S rRNA. In Mycoplasma capricolum subsp. capricolum (strain California kid / ATCC 27343 / NCTC 10154), this protein is Endoribonuclease YbeY.